Here is a 282-residue protein sequence, read N- to C-terminus: Lipoyl synthase (282 aa).

7 residues coordinate [4Fe-4S] cluster: Cys-37, Cys-42, Cys-48, Cys-63, Cys-67, Cys-70, and Ser-275. The Radical SAM core domain occupies 49 to 264 (WSRGTATFMI…RLVGIEKGFR (216 aa)).

This sequence belongs to the radical SAM superfamily. Lipoyl synthase family. The cofactor is [4Fe-4S] cluster.

The protein resides in the cytoplasm. The enzyme catalyses [[Fe-S] cluster scaffold protein carrying a second [4Fe-4S](2+) cluster] + N(6)-octanoyl-L-lysyl-[protein] + 2 oxidized [2Fe-2S]-[ferredoxin] + 2 S-adenosyl-L-methionine + 4 H(+) = [[Fe-S] cluster scaffold protein] + N(6)-[(R)-dihydrolipoyl]-L-lysyl-[protein] + 4 Fe(3+) + 2 hydrogen sulfide + 2 5'-deoxyadenosine + 2 L-methionine + 2 reduced [2Fe-2S]-[ferredoxin]. Its pathway is protein modification; protein lipoylation via endogenous pathway; protein N(6)-(lipoyl)lysine from octanoyl-[acyl-carrier-protein]: step 2/2. In terms of biological role, catalyzes the radical-mediated insertion of two sulfur atoms into the C-6 and C-8 positions of the octanoyl moiety bound to the lipoyl domains of lipoate-dependent enzymes, thereby converting the octanoylated domains into lipoylated derivatives. In Porphyromonas gingivalis (strain ATCC BAA-308 / W83), this protein is Lipoyl synthase.